We begin with the raw amino-acid sequence, 89 residues long: UPF0250 protein CV_3095 (89 aa).

It belongs to the UPF0250 family.

This Chromobacterium violaceum (strain ATCC 12472 / DSM 30191 / JCM 1249 / CCUG 213 / NBRC 12614 / NCIMB 9131 / NCTC 9757 / MK) protein is UPF0250 protein CV_3095.